We begin with the raw amino-acid sequence, 463 residues long: Cysteine--tRNA ligase (463 aa).

Cys-27 provides a ligand contact to Zn(2+). A 'HIGH' region motif is present at residues 29–39 (ATVQGLPHIGH). Residues Cys-205, His-230, and Glu-234 each contribute to the Zn(2+) site. The 'KMSKS' region motif lies at 261–265 (KMSKS). Residue Lys-264 coordinates ATP.

This sequence belongs to the class-I aminoacyl-tRNA synthetase family. Monomer. The cofactor is Zn(2+).

The protein resides in the cytoplasm. The enzyme catalyses tRNA(Cys) + L-cysteine + ATP = L-cysteinyl-tRNA(Cys) + AMP + diphosphate. In Mycolicibacterium vanbaalenii (strain DSM 7251 / JCM 13017 / BCRC 16820 / KCTC 9966 / NRRL B-24157 / PYR-1) (Mycobacterium vanbaalenii), this protein is Cysteine--tRNA ligase.